Here is a 458-residue protein sequence, read N- to C-terminus: Chromosomal replication initiator protein DnaA (458 aa).

Positions 1 to 79 are domain I, interacts with DnaA modulators; it reads MSLAIWQECL…ENPNHSVKIR (79 aa). Residues 79–120 are domain II; that stretch reads RLMVGNVSSVEKKPAKQIPTQAPLTNQPWEGESKAHRVPHKS. The disordered stretch occupies residues 92-114; that stretch reads PAKQIPTQAPLTNQPWEGESKAH. A compositionally biased stretch (polar residues) spans 96-106; that stretch reads IPTQAPLTNQP. The tract at residues 121–338 is domain III, AAA+ region; that stretch reads NLIKKYTFDN…GAIANISAKA (218 aa). Residues glycine 165, glycine 167, lysine 168, and threonine 169 each contribute to the ATP site. Positions 339–458 are domain IV, binds dsDNA; that stretch reads QFTGQGITIS…YKILIRTLSM (120 aa).

This sequence belongs to the DnaA family. Oligomerizes as a right-handed, spiral filament on DNA at oriC.

Its subcellular location is the cytoplasm. Functionally, plays an essential role in the initiation and regulation of chromosomal replication. ATP-DnaA binds to the origin of replication (oriC) to initiate formation of the DNA replication initiation complex once per cell cycle. Binds the DnaA box (a 9 base pair repeat at the origin) and separates the double-stranded (ds)DNA. Forms a right-handed helical filament on oriC DNA; dsDNA binds to the exterior of the filament while single-stranded (ss)DNA is stabiized in the filament's interior. The ATP-DnaA-oriC complex binds and stabilizes one strand of the AT-rich DNA unwinding element (DUE), permitting loading of DNA polymerase. After initiation quickly degrades to an ADP-DnaA complex that is not apt for DNA replication. Binds acidic phospholipids. The chain is Chromosomal replication initiator protein DnaA from Psychromonas ingrahamii (strain DSM 17664 / CCUG 51855 / 37).